The sequence spans 381 residues: Ubiquitin-associated protein 1-like (381 aa).

The UMA domain occupies 4 to 50 (LDGVPFKLPKGFVIGTEPLPGPELSVPACGEVLLGSMHDFSLERTAL). Disordered regions lie at residues 87 to 141 (LAPA…PGRR) and 185 to 228 (SLCP…LRSH). Over residues 95–104 (RDPEAGHQER) the composition is skewed to basic and acidic residues. Residues 105-123 (PEEEGEDEAEASSGSEEEP) show a composition bias toward acidic residues. A compositionally biased stretch (low complexity) spans 124-141 (APSSLQPGSPASPGPGRR). The segment covering 197-216 (ASPPGPAPQHPAAPASPPRP) has biased composition (pro residues).

In Homo sapiens (Human), this protein is Ubiquitin-associated protein 1-like (UBAP1L).